Here is a 286-residue protein sequence, read N- to C-terminus: Pollen allergen Phl p 5a (286 aa).

The segment covering 1 to 34 (ADLGYGPATPAAPAAGYTPATPAAPAGADAAGKA) has biased composition (low complexity). The tract at residues 1–35 (ADLGYGPATPAAPAAGYTPATPAAPAGADAAGKAT) is disordered.

Belongs to the Poa p IX/Phl p VI allergen family.

It localises to the secreted. In Phleum pratense (Common timothy), this protein is Pollen allergen Phl p 5a.